We begin with the raw amino-acid sequence, 535 residues long: CTP synthase (535 aa).

The Glutamine amidotransferase type-1 domain maps to 300 to 535; it reads RIGIVGKYAP…LVSASYERSK (236 aa). Residues C385, H509, and E511 each act as for GATase activity in the active site.

Belongs to the CTP synthase family.

The catalysed reaction is UTP + L-glutamine + ATP + H2O = CTP + L-glutamate + ADP + phosphate + 2 H(+). The protein operates within pyrimidine metabolism; CTP biosynthesis via de novo pathway; CTP from UDP: step 2/2. In terms of biological role, catalyzes the ATP-dependent amination of UTP to CTP with either L-glutamine or ammonia as the source of nitrogen. The protein is CTP synthase of Encephalitozoon cuniculi (strain GB-M1) (Microsporidian parasite).